We begin with the raw amino-acid sequence, 268 residues long: Leucyl/phenylalanyl-tRNA--protein transferase (268 aa).

The protein belongs to the L/F-transferase family.

The protein resides in the cytoplasm. The enzyme catalyses N-terminal L-lysyl-[protein] + L-leucyl-tRNA(Leu) = N-terminal L-leucyl-L-lysyl-[protein] + tRNA(Leu) + H(+). It catalyses the reaction N-terminal L-arginyl-[protein] + L-leucyl-tRNA(Leu) = N-terminal L-leucyl-L-arginyl-[protein] + tRNA(Leu) + H(+). The catalysed reaction is L-phenylalanyl-tRNA(Phe) + an N-terminal L-alpha-aminoacyl-[protein] = an N-terminal L-phenylalanyl-L-alpha-aminoacyl-[protein] + tRNA(Phe). Functionally, functions in the N-end rule pathway of protein degradation where it conjugates Leu, Phe and, less efficiently, Met from aminoacyl-tRNAs to the N-termini of proteins containing an N-terminal arginine or lysine. The chain is Leucyl/phenylalanyl-tRNA--protein transferase from Psychrobacter arcticus (strain DSM 17307 / VKM B-2377 / 273-4).